The chain runs to 519 residues: DDB1- and CUL4-associated factor 17 (519 aa).

A run of 2 helical transmembrane segments spans residues valine 186–isoleucine 206 and glycine 222–isoleucine 242.

In terms of assembly, interacts with DDB1, CUL4A and CUL4B. Ubiquitously expressed in the embryo, with higher expression in brain, liver and skin tissues.

It localises to the membrane. Its subcellular location is the nucleus. It is found in the nucleolus. Its pathway is protein modification; protein ubiquitination. In terms of biological role, may function as a substrate receptor for CUL4-DDB1 E3 ubiquitin-protein ligase complex. The chain is DDB1- and CUL4-associated factor 17 (Dcaf17) from Mus musculus (Mouse).